We begin with the raw amino-acid sequence, 95 residues long: Co-chaperonin GroES (95 aa).

Belongs to the GroES chaperonin family. Heptamer of 7 subunits arranged in a ring. Interacts with the chaperonin GroEL.

Its subcellular location is the cytoplasm. Functionally, together with the chaperonin GroEL, plays an essential role in assisting protein folding. The GroEL-GroES system forms a nano-cage that allows encapsulation of the non-native substrate proteins and provides a physical environment optimized to promote and accelerate protein folding. GroES binds to the apical surface of the GroEL ring, thereby capping the opening of the GroEL channel. In Jannaschia sp. (strain CCS1), this protein is Co-chaperonin GroES.